The sequence spans 934 residues: Replication factor C subunit 1 (934 aa).

The interval 1–190 (MSNSDIRSFF…RSSKSKGLPR (190 aa)) is disordered. Serine 27 is modified (phosphoserine). Over residues 29–39 (KPKRSLKKKRI) the composition is skewed to basic residues. The segment covering 89–104 (GVSTTPDEYFEQQSTR) has biased composition (polar residues). The span at 118-128 (TTSKDVVHPVK) shows a compositional bias: basic and acidic residues. The segment covering 165–186 (TSKSKSHTTTATTHTSRSSKSK) has biased composition (low complexity). Residues 236 to 326 (GNSDCLSGIS…PASGGTGAAA (91 aa)) form the BRCT domain. Residues threonine 362, cysteine 374, 416 to 423 (GPPGIGKT), and asparagine 519 contribute to the ATP site. Residues 876-895 (AEDEMLEEASDSEAANEEDI) are compositionally biased toward acidic residues. Residues 876 to 934 (AEDEMLEEASDSEAANEEDIDLSKDKFISVPKKPKKRTKAKAEASSSSSTSRRSRKKTA) are disordered.

The protein belongs to the activator 1 large subunit family. Heteropentamer of subunits rfc1, rfc2, rfc3, rfc4 and rfc5 that forms a complex (RFC) with PCNA in the presence of ATP. Interacts with cdc24.

The protein resides in the nucleus. It localises to the nucleolus. The elongation of primed DNA templates by DNA polymerase delta and epsilon requires the action of the accessory proteins PCNA and activator 1. Subunit 1 is essential for cell cycle progression. It may associate with components of the DNA replication machinery and serve to enhance the efficiency of DNA replication. The chain is Replication factor C subunit 1 (rfc1) from Schizosaccharomyces pombe (strain 972 / ATCC 24843) (Fission yeast).